The following is a 613-amino-acid chain: Ribosome-associated molecular chaperone SSB (613 aa).

The interval 1 to 391 is nucleotide binding domain (NBD); the sequence is MADGVFQGAI…ILTGQSTSDE (391 aa). Residues 16–18, K73, 205–207, 271–278, and G342 contribute to the ATP site; these read TTY, GGT, and ERAKRTLS. Residues 392 to 402 are inter-domain linker; it reads TKDLLLLDVAP. Residues 403–613 are substrate binding domain (SBD); the sequence is LSLGVGMQGD…RVVTKAMSSR (211 aa). Residues 516-612 are lid domain (SBDalpha); the sequence is SEDIEKMVNQ…KRVVTKAMSS (97 aa). Positions 574 to 582 match the Nuclear export signal motif; that stretch reads IEAALADAL.

Belongs to the heat shock protein 70 family. Ssb-type Hsp70 subfamily. As to quaternary structure, binds to ribosomes. Binds close to the ribosomal tunnel exit via contacts with both ribosomal proteins and rRNA. Directly interacts with nascent polypeptides. This interaction is dependent on the ribosome-associated complex (RAC). Interacts with SSE1. Interacts with FES1.

The protein resides in the cytoplasm. It carries out the reaction ATP + H2O = ADP + phosphate + H(+). Functionally, ribosome-bound, Hsp70-type chaperone that assists in the cotranslational folding of newly synthesized proteins in the cytosol. Stimulates folding by interacting with nascent chains, binding to short, largely hydrophobic sequences exposed by unfolded proteins, thereby stabilizing longer, more slowly translated, and aggregation-prone nascent polypeptides and domains that cannot fold stably until fully synthesized. The Hsp70-protein substrate interaction depends on ATP-binding and on allosteric regulation between the NBD and the SBD. The ATP-bound state is characterized by a fast exchange rate of substrate (low affinity state), while in the ADP-bound state exchange is much slower (high affinity state). During the Hsp70 cycle, the chaperone switches between the ATP-bound state (open conformation) and the ADP-bound state (closed conformation) by major conformational rearrangements involving mainly the lid domain. Ssb cooperates with a specific Hsp40/Hsp70 co-chaperone termed the ribosome-associated complex (RAC), which stimulates the ATPase activity of the ribosome-associated pool of Ssbs and switches it to the high affinity substrate binding state. Hsp110 chaperone SSE1 and FES1 act as nucleotide exchange factors that cause substrate release. The protein is Ribosome-associated molecular chaperone SSB (SSB1) of Candida glabrata (strain ATCC 2001 / BCRC 20586 / JCM 3761 / NBRC 0622 / NRRL Y-65 / CBS 138) (Yeast).